The sequence spans 552 residues: Urocanate hydratase (552 aa).

Residues 49-50 (GG), glutamine 127, 173-175 (GMG), aspartate 193, 239-240 (NA), 260-264 (QTSAH), 270-271 (YI), and tyrosine 319 each bind NAD(+). The active site involves cysteine 407. An NAD(+)-binding site is contributed by glycine 489.

This sequence belongs to the urocanase family. NAD(+) serves as cofactor.

The protein localises to the cytoplasm. It catalyses the reaction 4-imidazolone-5-propanoate = trans-urocanate + H2O. It functions in the pathway amino-acid degradation; L-histidine degradation into L-glutamate; N-formimidoyl-L-glutamate from L-histidine: step 2/3. Its function is as follows. Catalyzes the conversion of urocanate to 4-imidazolone-5-propionate. The protein is Urocanate hydratase of Bacillus mycoides (strain KBAB4) (Bacillus weihenstephanensis).